We begin with the raw amino-acid sequence, 160 residues long: Large ribosomal subunit protein uL22c (160 aa).

The protein belongs to the universal ribosomal protein uL22 family. As to quaternary structure, part of the 50S ribosomal subunit.

Its subcellular location is the plastid. It is found in the chloroplast. This protein binds specifically to 23S rRNA. Functionally, the globular domain of the protein is located near the polypeptide exit tunnel on the outside of the subunit, while an extended beta-hairpin is found that lines the wall of the exit tunnel in the center of the 70S ribosome. This chain is Large ribosomal subunit protein uL22c (rpl22), found in Capsella bursa-pastoris (Shepherd's purse).